A 338-amino-acid polypeptide reads, in one-letter code: Taste receptor type 2 member 39 (338 aa).

Residues 1–30 (MLGRCFPPNTKEKQQLRMIKLCDPAESELS) are Extracellular-facing. The chain crosses the membrane as a helical span at residues 31-51 (PFLITLTLAVLLAEYLTGIIA). Topologically, residues 52–74 (NGFITAIHAAEWVQNKSVSTSGR) are cytoplasmic. Residues 75 to 95 (ILVFLSVSRIALQSLMMLEIT) traverse the membrane as a helical segment. Topologically, residues 96–116 (ISSTSLSFYSEDAVYYAFKIS) are extracellular. A helical membrane pass occupies residues 117–137 (FIFLNFCSLWFAAWLSFFYFV). Residues 138–156 (KIANFSYPLFLKLRWRISG) lie on the Cytoplasmic side of the membrane. A helical membrane pass occupies residues 157-177 (LIPWLLWLSVFISFSHSMFCI). Residues 178-205 (NICTGYCDNSFPIHSSNSTEKTYFSEIS) lie on the Extracellular side of the membrane. Asn194 is a glycosylation site (N-linked (GlcNAc...) asparagine). The helical transmembrane segment at 206–226 (VVSLAFFFNLGIVIPLIMFIL) threads the bilayer. The Cytoplasmic segment spans residues 227-262 (AAILLILSLKRHTLHMGSNATGSKDPSMEAHIGAIK). The chain crosses the membrane as a helical span at residues 263–283 (ATSYFLILYIFNAVALFIYLS). Over 284 to 291 (NMFDINSL) the chain is Extracellular. Residues 292–312 (WNTLCQIIMAAYPASHSILLI) traverse the membrane as a helical segment. The Cytoplasmic portion of the chain corresponds to 313–338 (KDNPGLRRAWKQLQHRLHLYPKQWTL).

This sequence belongs to the G-protein coupled receptor T2R family.

The protein resides in the membrane. Its function is as follows. Receptor that may play a role in the perception of bitterness and is gustducin-linked. May play a role in sensing the chemical composition of the gastrointestinal content. The activity of this receptor may stimulate alpha gustducin, mediate PLC-beta-2 activation and lead to the gating of TRPM5. This chain is Taste receptor type 2 member 39 (TAS2R39), found in Macaca mulatta (Rhesus macaque).